A 54-amino-acid chain; its full sequence is uncharacterized protein (54 aa).

This is an uncharacterized protein from Saccharolobus solfataricus (Sulfolobus solfataricus).